We begin with the raw amino-acid sequence, 198 residues long: dTTP/UTP pyrophosphatase (198 aa).

The active-site Proton acceptor is the D75.

Belongs to the Maf family. YhdE subfamily. The cofactor is a divalent metal cation.

It localises to the cytoplasm. The enzyme catalyses dTTP + H2O = dTMP + diphosphate + H(+). The catalysed reaction is UTP + H2O = UMP + diphosphate + H(+). Nucleoside triphosphate pyrophosphatase that hydrolyzes dTTP and UTP. May have a dual role in cell division arrest and in preventing the incorporation of modified nucleotides into cellular nucleic acids. The chain is dTTP/UTP pyrophosphatase from Wolbachia sp. subsp. Drosophila simulans (strain wRi).